The sequence spans 329 residues: Phosphoenolpyruvate transferase (329 aa).

Residue D61 coordinates 7,8-didemethyl-8-hydroxy-5-deazariboflavin.

Belongs to the CofD family. In terms of assembly, homodimer. Mg(2+) is required as a cofactor.

It catalyses the reaction enolpyruvoyl-2-diphospho-5'-guanosine + 7,8-didemethyl-8-hydroxy-5-deazariboflavin = dehydro coenzyme F420-0 + GMP + H(+). Its pathway is cofactor biosynthesis; coenzyme F420 biosynthesis. Functionally, catalyzes the transfer of the phosphoenolpyruvate moiety from enoylpyruvoyl-2-diphospho-5'-guanosine (EPPG) to 7,8-didemethyl-8-hydroxy-5-deazariboflavin (FO) with the formation of dehydro coenzyme F420-0 and GMP. The polypeptide is Phosphoenolpyruvate transferase (Mycobacterium ulcerans (strain Agy99)).